The chain runs to 331 residues: Elongation factor Ts, mitochondrial (331 aa).

A disordered region spans residues 254-295 (SPLTVGEMPEVREEEGEKKDGDKQDEEERSTDSDEDETQMLR). Over residues 262-275 (PEVREEEGEKKDGD) the composition is skewed to basic and acidic residues. The segment covering 276–291 (KQDEEERSTDSDEDET) has biased composition (acidic residues).

This sequence belongs to the EF-Ts family.

The protein localises to the mitochondrion. Its function is as follows. Associates with the EF-Tu.GDP complex and induces the exchange of GDP to GTP. It remains bound to the aminoacyl-tRNA.EF-Tu.GTP complex up to the GTP hydrolysis stage on the ribosome. This is Elongation factor Ts, mitochondrial from Branchiostoma floridae (Florida lancelet).